Here is a 663-residue protein sequence, read N- to C-terminus: (R)-specific secondary-alkylsulfatase (663 aa).

The signal sequence occupies residues 1-28 (MSRFIRASQRRTLLATLIAATLAQPLLA). The Zn(2+) site is built by histidine 179, histidine 181, aspartate 183, and histidine 184. A sulfate-binding site is contributed by glutamine 232. Residues glutamate 291 and aspartate 310 each coordinate Zn(2+). Sulfate contacts are provided by residues 318-323 (NLLTPR) and arginine 328. Histidine 355 serves as a coordination point for Zn(2+). Position 417 (tyrosine 417) interacts with sulfate.

The protein belongs to the metallo-beta-lactamase superfamily. Type III sulfatase family. In terms of assembly, homodimer.

It carries out the reaction an (R)-secondary-alkyl sulfate + H2O = an (S)-secondary-alcohol + sulfate.. In terms of biological role, alkylsulfatase that catalyzes the enantioselective hydrolysis of secondary-alkylsulfates with strict inversion of configuration, leading to the formation of homochiral (S)-configurated alcohols and nonreacted sulfate esters. The substrate spectrum includes a range of linear, branched or cyclic sec-alkylsulfates. Can use sec-alkylsulfate esters bearing aromatic, olefinic and acetylenic moieties. Acts by cleaving the C-O bond, resulting in inversion at the carbon. The protein is (R)-specific secondary-alkylsulfatase of Pseudomonas sp.